A 262-amino-acid polypeptide reads, in one-letter code: Small ribosomal subunit protein eS4 (262 aa).

In terms of domain architecture, S4 RNA-binding spans 42 to 104; the sequence is LPLLIFLRNR…TGEFFRLIYD (63 aa).

This sequence belongs to the eukaryotic ribosomal protein eS4 family.

The chain is Small ribosomal subunit protein eS4 (RpS4) from Lysiphlebus testaceipes (Greenbugs aphid parastoid).